Reading from the N-terminus, the 418-residue chain is D-amino acid dehydrogenase (418 aa).

Position 3–17 (3–17) interacts with FAD; the sequence is VLILGSGVVGVATAY.

The protein belongs to the DadA oxidoreductase family. FAD serves as cofactor.

The catalysed reaction is a D-alpha-amino acid + A + H2O = a 2-oxocarboxylate + AH2 + NH4(+). Its pathway is amino-acid degradation; D-alanine degradation; NH(3) and pyruvate from D-alanine: step 1/1. In terms of biological role, oxidative deamination of D-amino acids. The polypeptide is D-amino acid dehydrogenase (Granulibacter bethesdensis (strain ATCC BAA-1260 / CGDNIH1)).